The chain runs to 874 residues: Alanine--tRNA ligase (874 aa).

4 residues coordinate Zn(2+): H563, H567, C665, and H669.

Belongs to the class-II aminoacyl-tRNA synthetase family. Zn(2+) is required as a cofactor.

It localises to the cytoplasm. The enzyme catalyses tRNA(Ala) + L-alanine + ATP = L-alanyl-tRNA(Ala) + AMP + diphosphate. In terms of biological role, catalyzes the attachment of alanine to tRNA(Ala) in a two-step reaction: alanine is first activated by ATP to form Ala-AMP and then transferred to the acceptor end of tRNA(Ala). Also edits incorrectly charged Ser-tRNA(Ala) and Gly-tRNA(Ala) via its editing domain. This chain is Alanine--tRNA ligase, found in Histophilus somni (strain 129Pt) (Haemophilus somnus).